The primary structure comprises 172 residues: uncharacterized protein (172 aa).

The protein belongs to the baculoviridae 19 kDa protein family.

This is an uncharacterized protein from Orgyia pseudotsugata multicapsid polyhedrosis virus (OpMNPV).